We begin with the raw amino-acid sequence, 126 residues long: Large ribosomal subunit protein uL14 (126 aa).

Belongs to the universal ribosomal protein uL14 family. In terms of assembly, part of the 50S ribosomal subunit. Forms a cluster with proteins L3 and L19. In the 70S ribosome, L14 and L19 interact and together make contacts with the 16S rRNA in bridges B5 and B8.

In terms of biological role, binds to 23S rRNA. Forms part of two intersubunit bridges in the 70S ribosome. This is Large ribosomal subunit protein uL14 from Persephonella marina (strain DSM 14350 / EX-H1).